The following is a 153-amino-acid chain: Small ribosomal subunit protein bS16 (153 aa).

The tract at residues 130–153 (EAEAAAAAEEAPAEEAAEEAPAEA) is disordered. Residues 140 to 153 (APAEEAAEEAPAEA) show a composition bias toward acidic residues.

It belongs to the bacterial ribosomal protein bS16 family.

The chain is Small ribosomal subunit protein bS16 from Bifidobacterium longum subsp. infantis (strain ATCC 15697 / DSM 20088 / JCM 1222 / NCTC 11817 / S12).